The primary structure comprises 354 residues: Probable L-ascorbate-6-phosphate lactonase UlaG (354 aa).

This sequence belongs to the UlaG family. Requires a divalent metal cation as cofactor.

The protein resides in the cytoplasm. It carries out the reaction L-ascorbate 6-phosphate + H2O = 3-dehydro-L-gulonate 6-phosphate. The protein operates within cofactor degradation; L-ascorbate degradation; D-xylulose 5-phosphate from L-ascorbate: step 1/4. In terms of biological role, probably catalyzes the hydrolysis of L-ascorbate-6-P into 3-keto-L-gulonate-6-P. Is essential for L-ascorbate utilization under anaerobic conditions. The chain is Probable L-ascorbate-6-phosphate lactonase UlaG from Shigella boydii serotype 18 (strain CDC 3083-94 / BS512).